The following is a 337-amino-acid chain: Fructose-1,6-bisphosphatase class 1 (337 aa).

The Mg(2+) site is built by E94, D116, L118, and D119. Residues 119–122, N210, and K276 contribute to the substrate site; that span reads DGSS. Residue E282 participates in Mg(2+) binding.

This sequence belongs to the FBPase class 1 family. Homotetramer. Mg(2+) serves as cofactor.

Its subcellular location is the cytoplasm. The catalysed reaction is beta-D-fructose 1,6-bisphosphate + H2O = beta-D-fructose 6-phosphate + phosphate. The protein operates within carbohydrate biosynthesis; gluconeogenesis. The chain is Fructose-1,6-bisphosphatase class 1 from Burkholderia vietnamiensis (strain G4 / LMG 22486) (Burkholderia cepacia (strain R1808)).